A 552-amino-acid chain; its full sequence is Putative acetolactate synthase large subunit IlvB2 (552 aa).

Glu48 is a thiamine diphosphate binding site. FAD is bound by residues 262–285 (FGDG…VGVS) and 309–328 (DPDP…ITTS). A thiamine pyrophosphate binding region spans residues 394 to 474 (TCISWTFRGI…VTWAVLNDGQ (81 aa)). Residue Asp445 coordinates Mg(2+).

It belongs to the TPP enzyme family. Heterodimer of large catalytic subunit and small regulatory subunit. Requires Mg(2+) as cofactor. The cofactor is thiamine diphosphate.

The catalysed reaction is 2 pyruvate + H(+) = (2S)-2-acetolactate + CO2. It functions in the pathway amino-acid biosynthesis; L-isoleucine biosynthesis; L-isoleucine from 2-oxobutanoate: step 1/4. It participates in amino-acid biosynthesis; L-valine biosynthesis; L-valine from pyruvate: step 1/4. In terms of biological role, catalyzes the conversion of 2 pyruvate molecules into acetolactate in the first common step of the biosynthetic pathway of the branched-amino acids such as leucine, isoleucine, and valine. In Mycobacterium tuberculosis (strain ATCC 25618 / H37Rv), this protein is Putative acetolactate synthase large subunit IlvB2 (ilvB2).